The sequence spans 174 residues: Endoribonuclease YbeY (174 aa).

The Zn(2+) site is built by His129, His133, and His139.

This sequence belongs to the endoribonuclease YbeY family. Zn(2+) is required as a cofactor.

The protein resides in the cytoplasm. Its function is as follows. Single strand-specific metallo-endoribonuclease involved in late-stage 70S ribosome quality control and in maturation of the 3' terminus of the 16S rRNA. The chain is Endoribonuclease YbeY from Lactobacillus delbrueckii subsp. bulgaricus (strain ATCC BAA-365 / Lb-18).